The following is a 304-amino-acid chain: Phosphatidylserine decarboxylase proenzyme (304 aa).

Residues D90, H147, and S253 each act as charge relay system; for autoendoproteolytic cleavage activity in the active site. Catalysis depends on S253, which acts as the Schiff-base intermediate with substrate; via pyruvic acid; for decarboxylase activity. At S253 the chain carries Pyruvic acid (Ser); by autocatalysis.

The protein belongs to the phosphatidylserine decarboxylase family. PSD-B subfamily. Prokaryotic type I sub-subfamily. In terms of assembly, heterodimer of a large membrane-associated beta subunit and a small pyruvoyl-containing alpha subunit. Pyruvate is required as a cofactor. Post-translationally, is synthesized initially as an inactive proenzyme. Formation of the active enzyme involves a self-maturation process in which the active site pyruvoyl group is generated from an internal serine residue via an autocatalytic post-translational modification. Two non-identical subunits are generated from the proenzyme in this reaction, and the pyruvate is formed at the N-terminus of the alpha chain, which is derived from the carboxyl end of the proenzyme. The autoendoproteolytic cleavage occurs by a canonical serine protease mechanism, in which the side chain hydroxyl group of the serine supplies its oxygen atom to form the C-terminus of the beta chain, while the remainder of the serine residue undergoes an oxidative deamination to produce ammonia and the pyruvoyl prosthetic group on the alpha chain. During this reaction, the Ser that is part of the protease active site of the proenzyme becomes the pyruvoyl prosthetic group, which constitutes an essential element of the active site of the mature decarboxylase.

The protein localises to the cell membrane. The catalysed reaction is a 1,2-diacyl-sn-glycero-3-phospho-L-serine + H(+) = a 1,2-diacyl-sn-glycero-3-phosphoethanolamine + CO2. The protein operates within phospholipid metabolism; phosphatidylethanolamine biosynthesis; phosphatidylethanolamine from CDP-diacylglycerol: step 2/2. Catalyzes the formation of phosphatidylethanolamine (PtdEtn) from phosphatidylserine (PtdSer). The polypeptide is Phosphatidylserine decarboxylase proenzyme (Dickeya dadantii (strain 3937) (Erwinia chrysanthemi (strain 3937))).